Consider the following 173-residue polypeptide: Large ribosomal subunit protein uL10 (173 aa).

The protein belongs to the universal ribosomal protein uL10 family. In terms of assembly, part of the ribosomal stalk of the 50S ribosomal subunit. The N-terminus interacts with L11 and the large rRNA to form the base of the stalk. The C-terminus forms an elongated spine to which L12 dimers bind in a sequential fashion forming a multimeric L10(L12)X complex.

Its function is as follows. Forms part of the ribosomal stalk, playing a central role in the interaction of the ribosome with GTP-bound translation factors. The sequence is that of Large ribosomal subunit protein uL10 from Geobacter sp. (strain M21).